The following is a 232-amino-acid chain: 5'-methylthioadenosine/S-adenosylhomocysteine nucleosidase (232 aa).

Glu-12 (proton acceptor) is an active-site residue. Residues Gly-78, Ile-152, and Met-173–Glu-174 each bind substrate. Asp-197 functions as the Proton donor in the catalytic mechanism.

This sequence belongs to the PNP/UDP phosphorylase family. MtnN subfamily. In terms of assembly, homodimer.

It carries out the reaction S-adenosyl-L-homocysteine + H2O = S-(5-deoxy-D-ribos-5-yl)-L-homocysteine + adenine. The catalysed reaction is S-methyl-5'-thioadenosine + H2O = 5-(methylsulfanyl)-D-ribose + adenine. The enzyme catalyses 5'-deoxyadenosine + H2O = 5-deoxy-D-ribose + adenine. It participates in amino-acid biosynthesis; L-methionine biosynthesis via salvage pathway; S-methyl-5-thio-alpha-D-ribose 1-phosphate from S-methyl-5'-thioadenosine (hydrolase route): step 1/2. Catalyzes the irreversible cleavage of the glycosidic bond in both 5'-methylthioadenosine (MTA) and S-adenosylhomocysteine (SAH/AdoHcy) to adenine and the corresponding thioribose, 5'-methylthioribose and S-ribosylhomocysteine, respectively. Also cleaves 5'-deoxyadenosine, a toxic by-product of radical S-adenosylmethionine (SAM) enzymes, into 5-deoxyribose and adenine. Thus, is required for in vivo function of the radical SAM enzymes biotin synthase and lipoic acid synthase, that are inhibited by 5'-deoxyadenosine accumulation. This is 5'-methylthioadenosine/S-adenosylhomocysteine nucleosidase from Escherichia coli O7:K1 (strain IAI39 / ExPEC).